The following is a 162-amino-acid chain: ATP synthase subunit b 1 (162 aa).

The chain crosses the membrane as a helical span at residues 3 to 23 (FLDATFFAFVGLVLFLALVVY).

This sequence belongs to the ATPase B chain family. F-type ATPases have 2 components, F(1) - the catalytic core - and F(0) - the membrane proton channel. F(1) has five subunits: alpha(3), beta(3), gamma(1), delta(1), epsilon(1). F(0) has three main subunits: a(1), b(2) and c(10-14). The alpha and beta chains form an alternating ring which encloses part of the gamma chain. F(1) is attached to F(0) by a central stalk formed by the gamma and epsilon chains, while a peripheral stalk is formed by the delta and b chains.

The protein localises to the cell inner membrane. Functionally, f(1)F(0) ATP synthase produces ATP from ADP in the presence of a proton or sodium gradient. F-type ATPases consist of two structural domains, F(1) containing the extramembraneous catalytic core and F(0) containing the membrane proton channel, linked together by a central stalk and a peripheral stalk. During catalysis, ATP synthesis in the catalytic domain of F(1) is coupled via a rotary mechanism of the central stalk subunits to proton translocation. Its function is as follows. Component of the F(0) channel, it forms part of the peripheral stalk, linking F(1) to F(0). This Rhizobium johnstonii (strain DSM 114642 / LMG 32736 / 3841) (Rhizobium leguminosarum bv. viciae) protein is ATP synthase subunit b 1.